A 243-amino-acid polypeptide reads, in one-letter code: NAD-dependent protein deacylase (243 aa).

Residues 1–234 form the Deacetylase sirtuin-type domain; the sequence is MYQHIVVLTG…PKLVDTILAG (234 aa). 10 to 29 contributes to the NAD(+) binding site; the sequence is GAGISAESGLRTFRDQDGLW. Residues Tyr54 and Arg57 each coordinate substrate. 91 to 94 is an NAD(+) binding site; that stretch reads QNID. Residue His109 is the Proton acceptor of the active site. 2 residues coordinate Zn(2+): Cys117 and Cys136. Residues 176–178, 202–204, and Ala220 each bind NAD(+); these read GTS and NLQ.

It belongs to the sirtuin family. Class III subfamily. Zn(2+) serves as cofactor.

It localises to the cytoplasm. The enzyme catalyses N(6)-acetyl-L-lysyl-[protein] + NAD(+) + H2O = 2''-O-acetyl-ADP-D-ribose + nicotinamide + L-lysyl-[protein]. The catalysed reaction is N(6)-succinyl-L-lysyl-[protein] + NAD(+) + H2O = 2''-O-succinyl-ADP-D-ribose + nicotinamide + L-lysyl-[protein]. In terms of biological role, NAD-dependent lysine deacetylase and desuccinylase that specifically removes acetyl and succinyl groups on target proteins. Modulates the activities of several proteins which are inactive in their acylated form. The protein is NAD-dependent protein deacylase of Shewanella oneidensis (strain ATCC 700550 / JCM 31522 / CIP 106686 / LMG 19005 / NCIMB 14063 / MR-1).